The following is a 161-amino-acid chain: uncharacterized protein (161 aa).

A helical membrane pass occupies residues 5–25 (GPTLLSLLAALLVSLGLLLWY).

This sequence belongs to the IIV-6 203L/325L family.

It is found in the membrane. This is an uncharacterized protein from Invertebrate iridescent virus 3 (IIV-3).